The following is a 39-amino-acid chain: Photosystem II reaction center protein J (39 aa).

Residues 7-27 traverse the membrane as a helical segment; sequence IPLWIVAVVAGLGVITVVGLF.

The protein belongs to the PsbJ family. PSII is composed of 1 copy each of membrane proteins PsbA, PsbB, PsbC, PsbD, PsbE, PsbF, PsbH, PsbI, PsbJ, PsbK, PsbL, PsbM, PsbT, PsbX, PsbY, PsbZ, Psb30/Ycf12, peripheral proteins PsbO, CyanoQ (PsbQ), PsbU, PsbV and a large number of cofactors. It forms dimeric complexes.

It is found in the cellular thylakoid membrane. Functionally, one of the components of the core complex of photosystem II (PSII). PSII is a light-driven water:plastoquinone oxidoreductase that uses light energy to abstract electrons from H(2)O, generating O(2) and a proton gradient subsequently used for ATP formation. It consists of a core antenna complex that captures photons, and an electron transfer chain that converts photonic excitation into a charge separation. This chain is Photosystem II reaction center protein J, found in Synechococcus sp. (strain JA-2-3B'a(2-13)) (Cyanobacteria bacterium Yellowstone B-Prime).